A 293-amino-acid chain; its full sequence is Ribosomal RNA small subunit methyltransferase A (293 aa).

6 residues coordinate S-adenosyl-L-methionine: Asn36, Leu38, Gly63, Glu84, Asp111, and Asn132.

This sequence belongs to the class I-like SAM-binding methyltransferase superfamily. rRNA adenine N(6)-methyltransferase family. RsmA subfamily.

It localises to the cytoplasm. It catalyses the reaction adenosine(1518)/adenosine(1519) in 16S rRNA + 4 S-adenosyl-L-methionine = N(6)-dimethyladenosine(1518)/N(6)-dimethyladenosine(1519) in 16S rRNA + 4 S-adenosyl-L-homocysteine + 4 H(+). Specifically dimethylates two adjacent adenosines (A1518 and A1519) in the loop of a conserved hairpin near the 3'-end of 16S rRNA in the 30S particle. May play a critical role in biogenesis of 30S subunits. In Treponema denticola (strain ATCC 35405 / DSM 14222 / CIP 103919 / JCM 8153 / KCTC 15104), this protein is Ribosomal RNA small subunit methyltransferase A.